The primary structure comprises 114 residues: Protein preY, mitochondrial (114 aa).

Residues 1-35 (MLSGARCRLASALRGTRAPPSAVARRCLHASGSRP) constitute a mitochondrion transit peptide. A disordered region spans residues 14-49 (RGTRAPPSAVARRCLHASGSRPLADRGKKTEEPPRD). Residues 36–49 (LADRGKKTEEPPRD) show a composition bias toward basic and acidic residues. The TRM112 domain occupies 51–97 (DPALLEFLVCPLSKKPLRYEASTNELINEELGIAYPIIDGIPNMIPQ).

Belongs to the PREY family. In terms of assembly, interacts (via TRM112 domain) with NDUFAF5; the interaction is direct and stabilizes NDUFAF5 protein. Interacts with COQ5; the interaction is direct, stabilizes COQ5 protein and associates PYURF with COQ enzyme complex.

The protein resides in the mitochondrion. Its function is as follows. In mitochondria, S-adenosylmethionine-dependent methyltransferase chaperone that supports both coenzyme Q biosynthesis, by stabilizing its components, such as COQ5, and NADH:ubiquinone oxidoreductase complex (complex I, MT-ND1) assembly, by stabilizing complex I assembly factors, such as NDUFAF5. This Homo sapiens (Human) protein is Protein preY, mitochondrial.